A 196-amino-acid polypeptide reads, in one-letter code: Late protein I196L (196 aa).

A run of 2 repeats spans residues 28 to 48 and 49 to 70. The stretch at 71-92 is one 3; approximate repeat; the sequence is SNYLTSAISTNISDKEEDTPFS.

It belongs to the asfivirus I196L family.

The protein is Late protein I196L of African swine fever virus (isolate Warthog/Namibia/Wart80/1980) (ASFV).